The primary structure comprises 230 residues: Fibrillarin-like rRNA/tRNA 2'-O-methyltransferase (230 aa).

Residues 87-88, 105-106, 130-131, and 150-153 contribute to the S-adenosyl-L-methionine site; these read TT, EF, DA, and DVAQ.

The protein belongs to the methyltransferase superfamily. Fibrillarin family. As to quaternary structure, interacts with nop5. Component of box C/D small ribonucleoprotein (sRNP) particles that contain rpl7ae, FlpA and nop5, plus a guide RNA.

Functionally, involved in pre-rRNA and tRNA processing. Utilizes the methyl donor S-adenosyl-L-methionine to catalyze the site-specific 2'-hydroxyl methylation of ribose moieties in rRNA and tRNA. Site specificity is provided by a guide RNA that base pairs with the substrate. Methylation occurs at a characteristic distance from the sequence involved in base pairing with the guide RNA. The polypeptide is Fibrillarin-like rRNA/tRNA 2'-O-methyltransferase (Methanococcus vannielii (strain ATCC 35089 / DSM 1224 / JCM 13029 / OCM 148 / SB)).